A 626-amino-acid chain; its full sequence is Putative ankyrin repeat protein R837 (626 aa).

18 ANK repeats span residues 42–72 (EYFN…GLIR), 80–109 (TLNT…NHRY), 110–139 (SEDK…NIKS), 140–169 (RNNY…DITV), 171–199 (DYEV…DIKK), 201–230 (NKKR…DVYR), 242–269 (KNYK…YQLS), 270–298 (DTNN…LHEL), 299–328 (NLNQ…DINT), 330–358 (GNSC…RLTS), 393–416 (TIMS…KSSL), 417–446 (DYES…ITKQ), 452–479 (INNS…GINI), 480–509 (CINY…NINE), 510–539 (FGDL…NIYI), 540–569 (IKDN…DYHK), 570–599 (KNEL…KTKT), and 601–626 (FFDP…NEIK).

The chain is Putative ankyrin repeat protein R837 from Acanthamoeba polyphaga (Amoeba).